Consider the following 358-residue polypeptide: tRNA (guanine(26)-N(2))-dimethyltransferase (358 aa).

In terms of domain architecture, Trm1 methyltransferase spans 5 to 354 (VIRREGKAVF…ATYGEVERVL (350 aa)). Residues Arg-39, Arg-69, Asp-87, Asp-113, and Ala-114 each contribute to the S-adenosyl-L-methionine site.

The protein belongs to the class I-like SAM-binding methyltransferase superfamily. Trm1 family.

The catalysed reaction is guanosine(26) in tRNA + 2 S-adenosyl-L-methionine = N(2)-dimethylguanosine(26) in tRNA + 2 S-adenosyl-L-homocysteine + 2 H(+). Functionally, dimethylates a single guanine residue at position 26 of a number of tRNAs using S-adenosyl-L-methionine as donor of the methyl groups. In Pyrobaculum calidifontis (strain DSM 21063 / JCM 11548 / VA1), this protein is tRNA (guanine(26)-N(2))-dimethyltransferase.